A 104-amino-acid polypeptide reads, in one-letter code: Interferon alpha-inducible protein 27-like protein 1 (104 aa).

A run of 3 helical transmembrane segments spans residues 14–34, 59–79, and 81–101; these read VAAV…LSAM, GGGV…AAGL, and VTSK…LGSP.

The protein belongs to the IFI6/IFI27 family.

The protein localises to the membrane. Plays a role in the apoptotic process and has a pro-apoptotic activity. This Homo sapiens (Human) protein is Interferon alpha-inducible protein 27-like protein 1.